The sequence spans 252 residues: Endonuclease NucS (252 aa).

Belongs to the NucS endonuclease family.

Its subcellular location is the cytoplasm. In terms of biological role, cleaves both 3' and 5' ssDNA extremities of branched DNA structures. This chain is Endonuclease NucS, found in Thermococcus kodakarensis (strain ATCC BAA-918 / JCM 12380 / KOD1) (Pyrococcus kodakaraensis (strain KOD1)).